Here is a 160-residue protein sequence, read N- to C-terminus: MMPAKLQLDVLRTLQSSARHGTQTLKNSNFLERFHKDRIVFCLPFFPALFFVPVQKVLQHLCLRFTQVAPYFIIQLFDLPSRHAENLAPLLASCRIQYTNCFSSSSNGQVPSIISLYLRVDLSPFYAKIFQISYRVPMIWLDVFQVFFVFLVISQHSLHS.

Transmembrane regions (helical) follow at residues 39–59 and 136–156; these read IVFCLPFFPALFFVPVQKVLQ and VPMIWLDVFQVFFVFLVISQH.

Belongs to the UPF0479 family.

It is found in the membrane. This chain is UPF0479 membrane protein YER190C-B, found in Saccharomyces cerevisiae (strain ATCC 204508 / S288c) (Baker's yeast).